We begin with the raw amino-acid sequence, 658 residues long: DNA mismatch repair protein MutL (658 aa).

Disordered stretches follow at residues arginine 114 to alanine 137 and arginine 437 to aspartate 456. Over residues proline 442–aspartate 456 the composition is skewed to polar residues.

The protein belongs to the DNA mismatch repair MutL/HexB family.

In terms of biological role, this protein is involved in the repair of mismatches in DNA. It is required for dam-dependent methyl-directed DNA mismatch repair. May act as a 'molecular matchmaker', a protein that promotes the formation of a stable complex between two or more DNA-binding proteins in an ATP-dependent manner without itself being part of a final effector complex. The protein is DNA mismatch repair protein MutL of Neisseria meningitidis serogroup B (strain ATCC BAA-335 / MC58).